Reading from the N-terminus, the 803-residue chain is Leucine--tRNA ligase (803 aa).

The 'HIGH' region motif lies at 40-51; that stretch reads PYPSGAGLHVGH. A 'KMSKS' region motif is present at residues 575–579; that stretch reads KMSKS. K578 is a binding site for ATP.

Belongs to the class-I aminoacyl-tRNA synthetase family.

The protein resides in the cytoplasm. It catalyses the reaction tRNA(Leu) + L-leucine + ATP = L-leucyl-tRNA(Leu) + AMP + diphosphate. The protein is Leucine--tRNA ligase of Listeria monocytogenes serotype 4a (strain HCC23).